The sequence spans 128 residues: Cytochrome c-type biogenesis protein CcmE (128 aa).

At 1–8 (MQKIVRNR) the chain is on the cytoplasmic side. Residues 9-29 (LIKIILCFCSTCLGISIILYN) form a helical; Signal-anchor for type II membrane protein membrane-spanning segment. The Periplasmic portion of the chain corresponds to 30 to 128 (LEKNIIFFFP…KHDENYRPPS (99 aa)). The heme site is built by His-120 and Tyr-124.

The protein belongs to the CcmE/CycJ family.

Its subcellular location is the cell inner membrane. In terms of biological role, heme chaperone required for the biogenesis of c-type cytochromes. Transiently binds heme delivered by CcmC and transfers the heme to apo-cytochromes in a process facilitated by CcmF and CcmH. In Rickettsia typhi (strain ATCC VR-144 / Wilmington), this protein is Cytochrome c-type biogenesis protein CcmE.